The following is a 482-amino-acid chain: FAD-linked oxidoreductase alt4 (482 aa).

Positions 53–211 constitute an FAD-binding PCMH-type domain; sequence ERPTYLAIVD…LEATFQVYPQ (159 aa).

Belongs to the oxygen-dependent FAD-linked oxidoreductase family. FAD serves as cofactor.

It participates in secondary metabolite biosynthesis. FAD-linked oxidoreductase; part of the gene cluster that mediates the biosynthesis of alternapyrone derivatives. Alternapyrone is a decaketide with octa-methylation from methionine on every C2 unit except the third unit. All the domains in the polyketide synthase alt5 are apparently involved in alternapyrone synthesis, that is, the 8 CMeT, 7 KR, 7 DH, and 4 ER reactions in the 9 KS-mediated condensation steps required for alternapyrone synthesis. the alternapyrone produced by alt5 might be intensively modified by cytochrome P450 monooxygenases alt1, alt2 and alt3 and FAD-dependent oxidoreductase alt4 present in the alt gene cluster. This Alternaria solani protein is FAD-linked oxidoreductase alt4.